The chain runs to 357 residues: ADLYENPMGLMGFEFIELASPTPNTLEPIFEIMGFTKVATHRSKDVHLYRQGAINLILNNEPHSVASYFAAEHGPSVCGMAFRVKDSQKAYKRALELGAQPIHIETGPMELNLPAIKGIGGAPLYLIDRFGEGSSIYDIDFVFLEGVDRHPVGAGLKIIDHLTHNVYRGRMAYWANFYEKLFNFREIRYFDIKGEYTGLTSKAMTAPDGMIRIPLNEESSKGAGQIEEFLMQFNGEGIQHVAFLSDDLIKTWDHLKSIGMRFMTAPPDTYYEMLEGRLPNHGEPVGELQARGILLDGSSESGDKRLLLQIFSETLMGPVFFEFIQRKGDDGFGEGNFKALFESIERDQVRRGVLSTD.

2 VOC domains span residues 12-129 (GFEF…LIDR) and 158-313 (IIDH…IFSE). Fe cation-binding residues include His-161, His-240, and Glu-322.

The protein belongs to the 4HPPD family. Homotetramer. It depends on Fe cation as a cofactor.

The catalysed reaction is 3-(4-hydroxyphenyl)pyruvate + O2 = homogentisate + CO2. It functions in the pathway amino-acid degradation; L-phenylalanine degradation; acetoacetate and fumarate from L-phenylalanine: step 3/6. The polypeptide is 4-hydroxyphenylpyruvate dioxygenase (hpd) (Pseudomonas sp. (strain P.J. 874)).